The primary structure comprises 80 residues: Small ribosomal subunit protein uS17 (80 aa).

This sequence belongs to the universal ribosomal protein uS17 family. Part of the 30S ribosomal subunit.

Its function is as follows. One of the primary rRNA binding proteins, it binds specifically to the 5'-end of 16S ribosomal RNA. The polypeptide is Small ribosomal subunit protein uS17 (Brucella anthropi (strain ATCC 49188 / DSM 6882 / CCUG 24695 / JCM 21032 / LMG 3331 / NBRC 15819 / NCTC 12168 / Alc 37) (Ochrobactrum anthropi)).